We begin with the raw amino-acid sequence, 397 residues long: Elongation factor Tu (397 aa).

A tr-type G domain is found at 10 to 206 (KPHVNIGTIG…AIDSYIPTPE (197 aa)). Residues 19–26 (GHVDHGKT) form a G1 region. 19–26 (GHVDHGKT) is a binding site for GTP. Thr26 serves as a coordination point for Mg(2+). Residues 60-64 (GITIN) are G2. A G3 region spans residues 81–84 (DCPG). GTP-binding positions include 81 to 85 (DCPGH) and 136 to 139 (NKAD). The tract at residues 136 to 139 (NKAD) is G4. A G5 region spans residues 174–176 (SAL).

Belongs to the TRAFAC class translation factor GTPase superfamily. Classic translation factor GTPase family. EF-Tu/EF-1A subfamily. As to quaternary structure, monomer.

Its subcellular location is the cytoplasm. The catalysed reaction is GTP + H2O = GDP + phosphate + H(+). Its function is as follows. GTP hydrolase that promotes the GTP-dependent binding of aminoacyl-tRNA to the A-site of ribosomes during protein biosynthesis. This chain is Elongation factor Tu, found in Clostridium botulinum (strain ATCC 19397 / Type A).